Reading from the N-terminus, the 385-residue chain is Protein-glutamate methylesterase/protein-glutamine glutaminase (385 aa).

A Response regulatory domain is found at 20-138 (RVMIVDDSVV…EASAADIFKH (119 aa)). Asp-71 is subject to 4-aspartylphosphate. Residues 189–383 (GVTAPRVLLI…PKLVRLFSGD (195 aa)) form the CheB-type methylesterase domain. Catalysis depends on residues Ser-201, His-229, and Asp-325.

This sequence belongs to the CheB family. Post-translationally, phosphorylated by CheA. Phosphorylation of the N-terminal regulatory domain activates the methylesterase activity.

The protein localises to the cytoplasm. The enzyme catalyses [protein]-L-glutamate 5-O-methyl ester + H2O = L-glutamyl-[protein] + methanol + H(+). It carries out the reaction L-glutaminyl-[protein] + H2O = L-glutamyl-[protein] + NH4(+). Its function is as follows. Involved in chemotaxis. Part of a chemotaxis signal transduction system that modulates chemotaxis in response to various stimuli. Catalyzes the demethylation of specific methylglutamate residues introduced into the chemoreceptors (methyl-accepting chemotaxis proteins or MCP) by CheR. Also mediates the irreversible deamidation of specific glutamine residues to glutamic acid. The sequence is that of Protein-glutamate methylesterase/protein-glutamine glutaminase from Rhodopseudomonas palustris (strain BisB5).